A 302-amino-acid polypeptide reads, in one-letter code: Ribosomal RNA small subunit methyltransferase A (302 aa).

6 residues coordinate S-adenosyl-L-methionine: His15, Leu17, Gly42, Glu64, Asp89, and Asn109. The interval 275–302 (DAASADGHDHGDGSGQGESSPGGARDQI) is disordered.

Belongs to the class I-like SAM-binding methyltransferase superfamily. rRNA adenine N(6)-methyltransferase family. RsmA subfamily.

Its subcellular location is the cytoplasm. It catalyses the reaction adenosine(1518)/adenosine(1519) in 16S rRNA + 4 S-adenosyl-L-methionine = N(6)-dimethyladenosine(1518)/N(6)-dimethyladenosine(1519) in 16S rRNA + 4 S-adenosyl-L-homocysteine + 4 H(+). Specifically dimethylates two adjacent adenosines (A1518 and A1519) in the loop of a conserved hairpin near the 3'-end of 16S rRNA in the 30S particle. May play a critical role in biogenesis of 30S subunits. The chain is Ribosomal RNA small subunit methyltransferase A from Parasynechococcus marenigrum (strain WH8102).